The primary structure comprises 242 residues: Linker for activation of T-cells family member 1 (242 aa).

Topologically, residues 1–4 (MEAD) are extracellular. A helical; Signal-anchor for type III membrane protein transmembrane segment spans residues 5 to 28 (ALSPVGLGLLLLPFLVTLLAALCV). S-palmitoyl cysteine attachment occurs at residues C27 and C30. The Cytoplasmic portion of the chain corresponds to 29-242 (RCRELPVSYD…PDYENLQELN (214 aa)). Residue T40 is modified to Phosphothreonine. 6 positions are modified to phosphoserine: S41, S44, S87, S104, S109, and S112. The segment at 78–118 (QPDLLPIPRSPQPLGGSHRMPSSQQNSDDANSVASYENQEP) is disordered. A compositionally biased stretch (polar residues) spans 97–115 (MPSSQQNSDDANSVASYEN). The tract at residues 136–139 (YLVV) is interaction with PLCG1. Residue Y175 is modified to Phosphotyrosine. Interaction with GRB2, GRAP2 and PIK3R1 stretches follow at residues 175–178 (YVNV) and 195–198 (YVNV). Residues 176–242 (VNVPESEESA…PDYENLQELN (67 aa)) are disordered. Phosphoserine occurs at positions 199, 212, and 215. Over residues 217–234 (EVEDEGEEEGVDGEEAPD) the composition is skewed to acidic residues. At Y235 the chain carries Phosphotyrosine.

In terms of assembly, when phosphorylated, interacts directly with the PIK3R1 subunit of phosphoinositide 3-kinase and the SH2 domains of GRB2, GRAP, GRAP2, PLCG1 and PLCG2. Interacts indirectly with CBL, SOS, VAV, and LCP2. Interacts with SHB and SKAP2. Interacts with FCGR1A. Interacts with CLNK. Interacts with GRB2, PLCG1 and THEMIS upon TCR activation in thymocytes. Interacts with THEMIS2. Phosphorylated on tyrosines by ZAP70 upon TCR activation, or by SYK upon other immunoreceptor activation; which leads to the recruitment of multiple signaling molecules. Is one of the most prominently tyrosine-phosphorylated proteins detected following TCR engagement. May be dephosphorylated by PTPRJ. Phosphorylated by ITK leading to the recruitment of VAV1 to LAT-containing complexes. In terms of processing, palmitoylation of Cys-27 and Cys-30 is required for raft targeting and efficient phosphorylation. Post-translationally, phosphorylated on tyrosines by ZAP70 upon TCR activation, or by SYK upon other immunoreceptor activation; which leads to the recruitment of multiple signaling molecules. Is one of the most prominently tyrosine-phosphorylated proteins detected following TCR engagement. May be dephosphorylated by PTPRJ. Phosphorylated by ITK leading to the recruitment of VAV1 to LAT-containing complexes. 'Lys-63'-linked ubiquitinated by TRAF6. As to expression, expressed in T-cells and mast cells.

It is found in the cell membrane. Functionally, required for TCR (T-cell antigen receptor)- and pre-TCR-mediated signaling, both in mature T-cells and during their development. Involved in FCGR3 (low affinity immunoglobulin gamma Fc region receptor III)-mediated signaling in natural killer cells and FCER1 (high affinity immunoglobulin epsilon receptor)-mediated signaling in mast cells. Couples activation of these receptors and their associated kinases with distal intracellular events such as mobilization of intracellular calcium stores, PKC activation, MAPK activation or cytoskeletal reorganization through the recruitment of PLCG1, GRB2, GRAP2, and other signaling molecules. The protein is Linker for activation of T-cells family member 1 (Lat) of Mus musculus (Mouse).